An 891-amino-acid polypeptide reads, in one-letter code: Schlafen family member 5 (891 aa).

Lys-59 is covalently cross-linked (Glycyl lysine isopeptide (Lys-Gly) (interchain with G-Cter in SUMO2)). 578–585 (GLPGSGKT) serves as a coordination point for ATP.

It belongs to the Schlafen family. Subgroup III subfamily.

Its function is as follows. May have a role in hematopoietic cell differentiation. The protein is Schlafen family member 5 (SLFN5) of Homo sapiens (Human).